Consider the following 268-residue polypeptide: 4-diphosphocytidyl-2-C-methyl-D-erythritol kinase (268 aa).

Lys9 is an active-site residue. 88 to 98 (PPGAGLGGGSS) lines the ATP pocket. The active site involves Asp130.

Belongs to the GHMP kinase family. IspE subfamily.

The catalysed reaction is 4-CDP-2-C-methyl-D-erythritol + ATP = 4-CDP-2-C-methyl-D-erythritol 2-phosphate + ADP + H(+). It participates in isoprenoid biosynthesis; isopentenyl diphosphate biosynthesis via DXP pathway; isopentenyl diphosphate from 1-deoxy-D-xylulose 5-phosphate: step 3/6. Functionally, catalyzes the phosphorylation of the position 2 hydroxy group of 4-diphosphocytidyl-2C-methyl-D-erythritol. This is 4-diphosphocytidyl-2-C-methyl-D-erythritol kinase from Aquifex aeolicus (strain VF5).